Here is a 363-residue protein sequence, read N- to C-terminus: Phosrestin-2 (363 aa).

The protein belongs to the arrestin family.

This Calliphora vicina (Blue blowfly) protein is Phosrestin-2 (ARR1).